The following is a 249-amino-acid chain: Cilia- and flagella-associated protein 410 (249 aa).

LRR repeat units lie at residues 19 to 40 (NVRK…REMP), 41 to 62 (SLEV…RSCR), and 63 to 84 (RLSE…FYLK). The LRRCT domain occupies 97-137 (NPCCGTSPHLYRMTVLRNLPHLQKLDNQAVTEEELTRALME). The interval 146–203 (HREGAGNGCPKPPYALNSVSSATETSQHLLSYTEETEVQGQTTTDQSPSFSPRDTMRS) is disordered. Polar residues predominate over residues 162 to 175 (NSVSSATETSQHLL).

As to quaternary structure, found in a complex with CFAP410, NEK1 and SPATA7. Interacts with NEK1. As to expression, expressed in the retina.

It localises to the cell projection. The protein localises to the cilium. The protein resides in the cytoplasm. It is found in the cytoskeleton. Its subcellular location is the cilium basal body. It localises to the mitochondrion. The protein localises to the photoreceptor outer segment. Plays a role in cilia formation and/or maintenance. Plays a role in the regulation of cell morphology and cytoskeletal organization. Involved in DNA damage repair. The chain is Cilia- and flagella-associated protein 410 from Mus musculus (Mouse).